Consider the following 259-residue polypeptide: MAIQSTRRLRRASSLLKKSKPYNKEKTNLSLSLSLKELHSVFKLFPEYELKFLNMMKLPITGKEPIKIPFDLSLHHQHTCLDLSPYANEQVSKSACVNCGTTNIPTASDAMVAYMNQISNVMQNRLYYYGFQKKVELIRMSAKQPTLFQIFYILSSIASNFLPIMFENNEKLNMYVVFQTRTLHIPCECINQIMTVSSGYTVLLDILHDSIVLHVLCKTIETSNIQIDINVLQRKIEEMDVPDEIGDKFEKLKHILPFI.

The CCCH-type zinc finger occupies 80-184 (CLDLSPYANE…YVVFQTRTLH (105 aa)).

The protein belongs to the herpesviridae NEC1 protein family. In terms of assembly, forms a heterohexameric complex with NEC2. Interacts with capsid vertex specific component 2/CVC2; this interaction directs the capsid to the host inner nuclear membrane to initiate budding. Phosphorylated at serine residues in the N-terminus. This phosphorylation regulates the localization within the inner nuclear membrane.

The protein localises to the host nucleus inner membrane. Its function is as follows. Plays an essential role in virion nuclear egress, the first step of virion release from infected cell. Within the host nucleus, NEC1 interacts with the newly formed capsid through the vertexes and directs it to the inner nuclear membrane by associating with NEC2. Induces the budding of the capsid at the inner nuclear membrane as well as its envelopment into the perinuclear space. There, the NEC1/NEC2 complex promotes the fusion of the enveloped capsid with the outer nuclear membrane and the subsequent release of the viral capsid into the cytoplasm where it will reach the secondary budding sites in the host Golgi or trans-Golgi network. The chain is Nuclear egress protein 1 from Homo sapiens (Human).